Reading from the N-terminus, the 178-residue chain is Cell division protein ZapC (178 aa).

The protein belongs to the ZapC family. Interacts directly with FtsZ.

Its subcellular location is the cytoplasm. Its function is as follows. Contributes to the efficiency of the cell division process by stabilizing the polymeric form of the cell division protein FtsZ. Acts by promoting interactions between FtsZ protofilaments and suppressing the GTPase activity of FtsZ. In Pseudoalteromonas atlantica (strain T6c / ATCC BAA-1087), this protein is Cell division protein ZapC.